A 117-amino-acid chain; its full sequence is Peptidyl-tRNA hydrolase (117 aa).

The protein belongs to the PTH2 family.

The protein localises to the cytoplasm. The enzyme catalyses an N-acyl-L-alpha-aminoacyl-tRNA + H2O = an N-acyl-L-amino acid + a tRNA + H(+). In terms of biological role, the natural substrate for this enzyme may be peptidyl-tRNAs which drop off the ribosome during protein synthesis. The sequence is that of Peptidyl-tRNA hydrolase from Metallosphaera sedula (strain ATCC 51363 / DSM 5348 / JCM 9185 / NBRC 15509 / TH2).